A 454-amino-acid polypeptide reads, in one-letter code: OTU domain-containing protein 1 (454 aa).

Disordered stretches follow at residues 36–64 (QSASPAAAAPEPDTGERPPAAATEPREAA) and 116–257 (LPPP…SRAD). A compositionally biased stretch (low complexity) spans 52 to 64 (RPPAAATEPREAA). Pro residues predominate over residues 116–125 (LPPPSAPSPP). Composition is skewed to basic and acidic residues over residues 151–164 (DAPDRNFRLSEHRQ), 193–210 (GEERRAERSSRGWDRASG), and 219–229 (ALRRQDPEAEA). Positions 282-411 (KYRFHIIPDG…NGHYDAVFDH (130 aa)) constitute an OTU domain. Residues 287–293 (IIPDGNC) form a cys-loop region. Aspartate 290 is an active-site residue. Cysteine 293 serves as the catalytic Nucleophile. A his-loop region spans residues 342 to 352 (AAQDGAWAGYP). The interval 399–404 (WLSNGH) is variable-loop. Histidine 404 is an active-site residue. The region spanning 430–449 (KRDEELAKSMAISLSKMYIE) is the UIM domain.

It carries out the reaction Thiol-dependent hydrolysis of ester, thioester, amide, peptide and isopeptide bonds formed by the C-terminal Gly of ubiquitin (a 76-residue protein attached to proteins as an intracellular targeting signal).. Its function is as follows. Deubiquitinating enzyme that specifically hydrolyzes 'Lys-63'-linked polyubiquitin to monoubiquitin. Required for the stability and translation of a subset mRNAs with a high abundance of rare codons by mediating deubiquitination of 40S ribosomal protein RPS10/eS10, thereby antagonizing ZNF598-mediated 40S ubiquitination. The abundance of rare codons in mRNAs can limit the translation rate and can lead to ribosome collisions that trigger activation of ribosome quality control (RQC) pathway by ZNF598. OTUD1-mediated deubiquitination prevents activation of the RQC and subsequent dissociation of ribosomes and stimulates formation of polysomes and translation. The chain is OTU domain-containing protein 1 (Otud1) from Mus musculus (Mouse).